Consider the following 532-residue polypeptide: MTDDIAPSGYQPHRISTLAVLIGFIALLTAWLRRDRRLASIPGPRTYPLVGLGYKLPPKAPALFRKWAMEYGDVFRIRVGWYDWVVINSPEAIAEILEKQAVKTSSKAPSPLGHDVVTGGNRMPTMPYGKEWRNLRSVVRQITTVPMTASFVPSQEFEAKQLLFDLATDNENQRNFYQHMRRYAFSIIMTNTFGTRVKSWDHPDAQNAVRSQAVLRRTSRPGAFLVDELPPLARLPKXXXXXXXXXXXAAKVETGKAPHCYAREIYESRESWYAKGATEEQLAWVSGGLVEAGFETTAGTLNSLVLYLAANPQVQKTAQEELMRAVGPHRLPTFEDTRRLPYIRACVKEVLRMNPILSPGIRHYADEDVVYKEHVIPKGTVLLANTAYLHYDPRRYKDPQKFMPERYLDHPLYSSDYAAMTDPSRRDHFTFSTGRRTCPGARLAENSLTIALAGMLWAFEIRPGLVDGVETEVDMSDDAYLDTGFTLPKPFAARFLPWSEERLQIVKEQWELASKKGYELRGVPVDIEGMTK.

Residues 15–32 (ISTLAVLIGFIALLTAWL) traverse the membrane as a helical segment. Heme is bound at residue Cys438.

This sequence belongs to the cytochrome P450 family. Requires heme as cofactor.

The protein localises to the membrane. Its pathway is pigment biosynthesis. It functions in the pathway secondary metabolite biosynthesis. In terms of biological role, cytochrome P450 monooxygenase; part of the gene cluster that mediates the biosynthesis of pleosporalin A, ascomycone A, as well as a third cryptic naphthoquinone derived pigment, all responsible for the coloration of conidia. Involved in the oxidation of fusarubinaldehyde at C-9. PgmC has low substrate-specificity and is also able to use the pgmA product 3-acetonyl-1,6,8-trihydroxy-2-naphthaldehyde as a substrate. The pathway begins with the biosynthesis of the cyclized heptaketide 3-acetonyl-1,6,8-trihydroxy-2-naphthaldehyde by the NR-PKS pgmA. The C-6 hydroxyl group is further methylated by the O-methyltransferase pgmB to yield fusarubinaldehyde which is in turn oxidized by the cytochrome P450 monooxygenase pgmC at C-9. The C-1 hydroxyl group is then methylated spontaneously. Although pgmE, pgmD and pgmH are essential for the production of pleosporalin A, it is not the case for the 2 other final products and it remains difficult to assign a specific function to each enzyme. PgmF and pgmG seem not to be involved in pigment biosynthesis although they were regulated by the cluster-specific transcription factor pgmR. The chain is Cytochrome P450 monooxygenase pgmC from Aspergillus terreus (strain NIH 2624 / FGSC A1156).